The sequence spans 502 residues: uncharacterized protein (502 aa).

A helical transmembrane segment spans residues 1–21; it reads MKIFLVILSVFFFNGCFGLAY. PLD phosphodiesterase domains follow at residues 162 to 189 and 396 to 423; these read IKKR…GDNY and TKHS…DPRS.

It belongs to the phospholipase D family. Cardiolipin synthase subfamily.

The protein localises to the cell membrane. This is an uncharacterized protein from Helicobacter pylori (strain J99 / ATCC 700824) (Campylobacter pylori J99).